The sequence spans 338 residues: Lipoate-protein ligase A (338 aa).

Residues Pro-29–Val-216 enclose the BPL/LPL catalytic domain. Residues Arg-71, Gly-76–Phe-79, and Lys-134 contribute to the ATP site. Lys-134 provides a ligand contact to (R)-lipoate.

Belongs to the LplA family. Monomer.

The protein resides in the cytoplasm. The enzyme catalyses L-lysyl-[lipoyl-carrier protein] + (R)-lipoate + ATP = N(6)-[(R)-lipoyl]-L-lysyl-[lipoyl-carrier protein] + AMP + diphosphate + H(+). Its pathway is protein modification; protein lipoylation via exogenous pathway; protein N(6)-(lipoyl)lysine from lipoate: step 1/2. It functions in the pathway protein modification; protein lipoylation via exogenous pathway; protein N(6)-(lipoyl)lysine from lipoate: step 2/2. Its function is as follows. Catalyzes both the ATP-dependent activation of exogenously supplied lipoate to lipoyl-AMP and the transfer of the activated lipoyl onto the lipoyl domains of lipoate-dependent enzymes. The sequence is that of Lipoate-protein ligase A from Escherichia fergusonii (strain ATCC 35469 / DSM 13698 / CCUG 18766 / IAM 14443 / JCM 21226 / LMG 7866 / NBRC 102419 / NCTC 12128 / CDC 0568-73).